We begin with the raw amino-acid sequence, 74 residues long: uncharacterized protein (74 aa).

Residues 54 to 72 (LIIPRFLLLIYSVIQCLFL) form a helical membrane-spanning segment.

It localises to the membrane. This is an uncharacterized protein from Saccharomyces cerevisiae (strain ATCC 204508 / S288c) (Baker's yeast).